A 179-amino-acid chain; its full sequence is ADP-ribosylation factor 1-like 1 (179 aa).

Glycine 2 carries N-myristoyl glycine lipidation. The important for the stable binding to the membranes stretch occupies residues 3-16 (LFFSKISSFMFPNI). GTP-binding positions include 24 to 32 (GLDGAGKTT), 126 to 129 (NKQD), and alanine 160.

This sequence belongs to the small GTPase superfamily. Arf family.

It is found in the golgi apparatus membrane. It catalyses the reaction GTP + H2O = GDP + phosphate + H(+). With respect to regulation, alternates between an inactive GDP-bound form and an active GTP-bound form. Activated by a guanine nucleotide-exchange factor (GEF) and inactivated by GTPase-activating protein (GAP). Small GTPase involved in protein trafficking between different compartments. Modulates vesicle budding and uncoating within the Golgi complex. In its GTP-bound form, triggers the recruitment of coatomer proteins to the Golgi membrane. The hydrolysis of ARF1-bound GTP, which is mediated by ARFGAPs proteins, is required for dissociation of coat proteins from Golgi membranes and vesicles. This Caenorhabditis elegans protein is ADP-ribosylation factor 1-like 1 (arf-1.1).